The following is a 249-amino-acid chain: BPI fold-containing family A member 1 (249 aa).

The N-terminal stretch at 1–15 (MFQVAGLIVFCGLLA) is a signal peptide. Residues 81–86 (LLGGLL) form an important for surfactant activity and antibacterial properties region. An N-linked (GlcNAc...) asparagine glycan is attached at Asn-151. Cys-173 and Cys-217 are joined by a disulfide.

This sequence belongs to the BPI/LBP/Plunc superfamily. Plunc family. As to quaternary structure, monomer. Interacts (via N-terminus) with SCNN1B, a subunit of the heterotrimeric epithelial sodium channel (ENaC); this inhibits proteolytic activation of ENaC. Expressed in lung and trachea.

The protein resides in the secreted. Lipid-binding protein which shows high specificity for the surfactant phospholipid dipalmitoylphosphatidylcholine (DPPC). Plays a role in the innate immune responses of the upper airways. Reduces the surface tension in secretions from airway epithelia and inhibits the formation of biofilm by pathogenic Gram-negative bacteria, such as P.aeruginosa and K.pneumoniae. Negatively regulates proteolytic cleavage of SCNN1G, an event that is required for activation of the epithelial sodium channel (ENaC), and thereby contributes to airway surface liquid homeostasis and proper clearance of mucus. Plays a role in the airway inflammatory response after exposure to irritants. May attract macrophages and neutrophils. The protein is BPI fold-containing family A member 1 (BPIFA1) of Sus scrofa (Pig).